The primary structure comprises 271 residues: UPF0758 protein ACIAD3126 (271 aa).

Residues 120–242 (NLNSSRLVLD…TFSFAERALL (123 aa)) form the MPN domain. 3 residues coordinate Zn(2+): H191, H193, and D204. The short motif at 191 to 204 (HNHPFGKAEPSAAD) is the JAMM motif element.

Belongs to the UPF0758 family.

This is UPF0758 protein ACIAD3126 from Acinetobacter baylyi (strain ATCC 33305 / BD413 / ADP1).